The primary structure comprises 201 residues: Dephospho-CoA kinase (201 aa).

The DPCK domain maps to 2–201 (MIGLTGGIAS…KRWKVIPEDQ (200 aa)). 10-15 (ASGKSS) serves as a coordination point for ATP.

It belongs to the CoaE family.

Its subcellular location is the cytoplasm. The catalysed reaction is 3'-dephospho-CoA + ATP = ADP + CoA + H(+). It functions in the pathway cofactor biosynthesis; coenzyme A biosynthesis; CoA from (R)-pantothenate: step 5/5. Its function is as follows. Catalyzes the phosphorylation of the 3'-hydroxyl group of dephosphocoenzyme A to form coenzyme A. The sequence is that of Dephospho-CoA kinase from Halalkalibacterium halodurans (strain ATCC BAA-125 / DSM 18197 / FERM 7344 / JCM 9153 / C-125) (Bacillus halodurans).